The chain runs to 248 residues: tRNA pseudouridine synthase A (248 aa).

The active-site Nucleophile is the Asp-53. Tyr-111 lines the substrate pocket.

This sequence belongs to the tRNA pseudouridine synthase TruA family. As to quaternary structure, homodimer.

It carries out the reaction uridine(38/39/40) in tRNA = pseudouridine(38/39/40) in tRNA. Formation of pseudouridine at positions 38, 39 and 40 in the anticodon stem and loop of transfer RNAs. The polypeptide is tRNA pseudouridine synthase A (Listeria monocytogenes serotype 4b (strain CLIP80459)).